A 260-amino-acid polypeptide reads, in one-letter code: DNA repair protein RecO (260 aa).

This sequence belongs to the RecO family.

Its function is as follows. Involved in DNA repair and RecF pathway recombination. The sequence is that of DNA repair protein RecO from Chlorobaculum parvum (strain DSM 263 / NCIMB 8327) (Chlorobium vibrioforme subsp. thiosulfatophilum).